The chain runs to 510 residues: NAD(P)H-quinone oxidoreductase subunit 2 B, chloroplastic (510 aa).

Transmembrane regions (helical) follow at residues 26-46 (LFDG…ILLL), 57-77 (IPWF…ALLF), 99-119 (IFQF…VEYI), 124-144 (MAIT…MFLC), 149-169 (LITI…LSGY), 183-203 (YLLM…WLYG), 227-247 (PGIS…LSPA), 295-315 (WHPL…LIAI), 323-342 (MLAY…IIVG), 354-374 (YMLF…LFGL), 395-415 (ALSL…AGFF), 418-438 (LHLF…IGLF), and 484-504 (MIVC…IIAI).

The protein belongs to the complex I subunit 2 family. NDH is composed of at least 16 different subunits, 5 of which are encoded in the nucleus.

The protein localises to the plastid. The protein resides in the chloroplast thylakoid membrane. It carries out the reaction a plastoquinone + NADH + (n+1) H(+)(in) = a plastoquinol + NAD(+) + n H(+)(out). The catalysed reaction is a plastoquinone + NADPH + (n+1) H(+)(in) = a plastoquinol + NADP(+) + n H(+)(out). In terms of biological role, NDH shuttles electrons from NAD(P)H:plastoquinone, via FMN and iron-sulfur (Fe-S) centers, to quinones in the photosynthetic chain and possibly in a chloroplast respiratory chain. The immediate electron acceptor for the enzyme in this species is believed to be plastoquinone. Couples the redox reaction to proton translocation, and thus conserves the redox energy in a proton gradient. This chain is NAD(P)H-quinone oxidoreductase subunit 2 B, chloroplastic, found in Oenothera argillicola (Appalachian evening primrose).